The following is a 180-amino-acid chain: Cytokinin-beta-glucosidase 1 (180 aa).

Its function is as follows. Hydrolyzes cytokinin glucosides thus liberating free cytokinins. The protein is Cytokinin-beta-glucosidase 1 (ROLC1) of Panax ginseng (Korean ginseng).